The sequence spans 1489 residues: DEAD-box ATP-dependent DNA helicase Fancm (1489 aa).

The Helicase ATP-binding domain occupies 65–237 (IVQSALFKNT…AVCRNLYISN (173 aa)). Position 78 to 85 (78 to 85 (LPTGLGKT)) interacts with ATP. Positions 185 to 188 (DEAH) match the DEAH box motif. A Helicase C-terminal domain is found at 418-584 (KLRQVLVQHF…VVKLSLYEQN (167 aa)). 6 disordered regions span residues 591 to 647 (KFQP…ESQQ), 980 to 1000 (VEESQRSTPISIADSSGESNH), 1145 to 1182 (TETIKNSENKNSHEDGSRTVSPDIFGSDSMSPLKPQGK), 1196 to 1222 (VLPCPPPNSVGLNSPENRKRTNPSIQE), 1255 to 1293 (NPTISVPKDEEDSPIARRPSKRKIVISSDEEEEQKPQIA), and 1452 to 1489 (ERRKQRRLGKVPSAPVNKRRRLQTISTSSDEDDVVLID). The segment covering 594–610 (PKCEEKHMEPVAEEKPK) has biased composition (basic and acidic residues). The span at 611 to 625 (PKSAAKTKESRKRKQ) shows a compositional bias: basic residues. Positions 985-998 (RSTPISIADSSGES) are enriched in polar residues. Residues 1149–1161 (KNSENKNSHEDGS) are compositionally biased toward basic and acidic residues. The segment covering 1480–1489 (SDEDDVVLID) has biased composition (acidic residues).

The protein belongs to the DEAD box helicase family. DEAH subfamily. FANCM sub-subfamily.

The protein resides in the nucleus. The enzyme catalyses ATP + H2O = ADP + phosphate + H(+). The catalysed reaction is Couples ATP hydrolysis with the unwinding of duplex DNA by translocating in the 3'-5' direction.. Functionally, a ssDNA-dependent ATPase with 3' to 5' helicase activity. Involved in multiple DNA-damage responses, some that require ATPase and helicase activity and some that are independent of these. Involved in DNA interstrand cross-link repair, probably together with Fancl and other Fanconi anemia pathway homologs. Independent of Fancl involved in DNA double strand break repair, including contributing to the synthesis-dependent strand annealing (SDSA) pathway. Probably contributes to SDSA by unwinding short duplex regions in complex D-loop-like DNA structures. The chain is DEAD-box ATP-dependent DNA helicase Fancm from Drosophila melanogaster (Fruit fly).